Here is a 337-residue protein sequence, read N- to C-terminus: UPF0284 protein AF_0276 (337 aa).

Belongs to the UPF0284 family.

In Archaeoglobus fulgidus (strain ATCC 49558 / DSM 4304 / JCM 9628 / NBRC 100126 / VC-16), this protein is UPF0284 protein AF_0276.